The following is a 669-amino-acid chain: DNA mismatch repair protein MutL (669 aa).

Positions 356-377 are disordered; that stretch reads FEQRQNTENNQEKTFSSEESNS. Positions 361–377 are enriched in polar residues; it reads NTENNQEKTFSSEESNS.

It belongs to the DNA mismatch repair MutL/HexB family.

Its function is as follows. This protein is involved in the repair of mismatches in DNA. It is required for dam-dependent methyl-directed DNA mismatch repair. May act as a 'molecular matchmaker', a protein that promotes the formation of a stable complex between two or more DNA-binding proteins in an ATP-dependent manner without itself being part of a final effector complex. In Staphylococcus aureus (strain MSSA476), this protein is DNA mismatch repair protein MutL.